The sequence spans 320 residues: Transaldolase (320 aa).

Lys-135 acts as the Schiff-base intermediate with substrate in catalysis.

This sequence belongs to the transaldolase family. Type 1 subfamily. Homodimer.

It is found in the cytoplasm. The catalysed reaction is D-sedoheptulose 7-phosphate + D-glyceraldehyde 3-phosphate = D-erythrose 4-phosphate + beta-D-fructose 6-phosphate. The protein operates within carbohydrate degradation; pentose phosphate pathway; D-glyceraldehyde 3-phosphate and beta-D-fructose 6-phosphate from D-ribose 5-phosphate and D-xylulose 5-phosphate (non-oxidative stage): step 2/3. Its function is as follows. Transaldolase is important for the balance of metabolites in the pentose-phosphate pathway. The protein is Transaldolase of Colwellia psychrerythraea (strain 34H / ATCC BAA-681) (Vibrio psychroerythus).